The following is a 698-amino-acid chain: MRKRVTYKIGEHDLILETGYLAKQANGSIYAEYAGSAILATICASGQAQEGLDYVPLTVDYNEKYYAAGKIPGGFIKREGRPKDKEILVSRLIDRPMRPLFNKEFGREIQLVPTCISTDMINPPDILAVIASSAAVHISDIPFDGPVAAARVAYKNGEYIINPTFSQIETADMEIVVAGTKEGITMVEGGANEVSEEVMLTALEKAHEMIKSLCKMQEDLRELAGKEKLPLVPLEAELENKQAIYDEAFPRLSKTLYLSTKMERREESDKVKKELAEKYAEQLEDEIQLKLFNALFEEMEYNILRTNILDKGLRVDGRGTKDIRPITCEIGVLPRPHGSAVFTRGETQSLGVVTIGTVFDEQIYDDIEGDRRENFILHYNFPPFSVGEVGRLGTGRREIGHGNLAHRSLYPMVPEREKFPYTVRVVSEVLESNGSSSMATVCSGTLSMLHAGVPMKKPVAGIAMGLITEGNDRYAILSDILGEEDHLGDMDFKVAGTADGITGFQMDIKIAGVSPEIMKNALAQAKEGRMHILGIMNQCISAPNAELSQYAPRVEMMTIPEDKIGALIGPGGKNVKAISDKYNVTINTENDGTVTIYSKDGTSDLKGAKSIVKGITSDPEVGMVYDGTVKKIMDFGAFVEILPGKEGLCHISKLSRSRVEKVSDVLKEGQEIPVKLLEIDKLGRLNLSYVDALEERSK.

Mg(2+) contacts are provided by Asp-485 and Asp-491. A KH domain is found at 552–612 (PRVEMMTIPE…SDLKGAKSIV (61 aa)). The S1 motif domain maps to 622–690 (GMVYDGTVKK…KLGRLNLSYV (69 aa)).

The protein belongs to the polyribonucleotide nucleotidyltransferase family. It depends on Mg(2+) as a cofactor.

Its subcellular location is the cytoplasm. The enzyme catalyses RNA(n+1) + phosphate = RNA(n) + a ribonucleoside 5'-diphosphate. Its function is as follows. Involved in mRNA degradation. Catalyzes the phosphorolysis of single-stranded polyribonucleotides processively in the 3'- to 5'-direction. The sequence is that of Polyribonucleotide nucleotidyltransferase from Treponema denticola (strain ATCC 35405 / DSM 14222 / CIP 103919 / JCM 8153 / KCTC 15104).